The primary structure comprises 222 residues: Peptide methionine sulfoxide reductase MsrA (222 aa).

C60 is an active-site residue.

This sequence belongs to the MsrA Met sulfoxide reductase family.

It catalyses the reaction L-methionyl-[protein] + [thioredoxin]-disulfide + H2O = L-methionyl-(S)-S-oxide-[protein] + [thioredoxin]-dithiol. It carries out the reaction [thioredoxin]-disulfide + L-methionine + H2O = L-methionine (S)-S-oxide + [thioredoxin]-dithiol. Functionally, has an important function as a repair enzyme for proteins that have been inactivated by oxidation. Catalyzes the reversible oxidation-reduction of methionine sulfoxide in proteins to methionine. The polypeptide is Peptide methionine sulfoxide reductase MsrA (Pseudomonas putida (strain ATCC 47054 / DSM 6125 / CFBP 8728 / NCIMB 11950 / KT2440)).